The sequence spans 515 residues: Mucin-like protein Glc1.8b (515 aa).

A signal peptide spans 1–20; it reads MSQITLIILVLAIGFSCTKS. The Extracellular portion of the chain corresponds to 21–467; the sequence is HPINSTRDGE…ANDIKKPAFP (447 aa). 29 N-linked (GlcNAc...) asparagine; by host glycosylation sites follow: Asn24, Asn45, Asn51, Asn60, Asn85, Asn93, Asn102, Asn123, Asn129, Asn138, Asn180, Asn201, Asn207, Asn216, Asn258, Asn279, Asn285, Asn294, Asn319, Asn327, Asn336, Asn357, Asn363, Asn372, Asn397, Asn405, Asn413, Asn434, and Asn441. The tract at residues 80 to 114 is disordered; the sequence is SKKDENITGQSEINTSAKSQPINSTRDGEDSGTDL. Residues 86–104 are compositionally biased toward polar residues; that stretch reads ITGQSEINTSAKSQPINST. A disordered region spans residues 314–358; that stretch reads SKKDENITGQSEINTSAKSQPINSTRDGEDSGTDLKNLLTDPANT. Positions 320 to 338 are enriched in polar residues; sequence ITGQSEINTSAKSQPINST. Residues 393–413 are disordered; it reads RKDENVTGQSEFNISTNSNLN. The helical transmembrane segment at 468–488 threads the bilayer; it reads YCIILITFQIVTVGMIIYLVF. Residues 489–515 are Cytoplasmic-facing; sequence RTMRKPCQSERAIPLNSFGFGNNSSYE.

Belongs to the polydnaviridae Glc1.8 protein family.

The protein resides in the host membrane. In terms of biological role, involved in suppression of the insect cellular immune response. Inhibits host hemocyte adhesion and phagocytosis. The protein is Mucin-like protein Glc1.8b (O16) of Microplitis demolitor (Parasitoid wasp).